We begin with the raw amino-acid sequence, 212 residues long: Pyrrolidone-carboxylate peptidase (212 aa).

Catalysis depends on residues Glu-78, Cys-141, and His-165.

This sequence belongs to the peptidase C15 family. In terms of assembly, homotetramer.

It localises to the cytoplasm. The catalysed reaction is Release of an N-terminal pyroglutamyl group from a polypeptide, the second amino acid generally not being Pro.. In terms of biological role, removes 5-oxoproline from various penultimate amino acid residues except L-proline. This chain is Pyrrolidone-carboxylate peptidase, found in Staphylococcus aureus (strain Mu3 / ATCC 700698).